Reading from the N-terminus, the 118-residue chain is Small ribosomal subunit protein uS13 (118 aa).

The tract at residues 94–118 (SLPLRGQRTKTNARTRKGPRKPIKK) is disordered.

The protein belongs to the universal ribosomal protein uS13 family. As to quaternary structure, part of the 30S ribosomal subunit. Forms a loose heterodimer with protein S19. Forms two bridges to the 50S subunit in the 70S ribosome.

Its function is as follows. Located at the top of the head of the 30S subunit, it contacts several helices of the 16S rRNA. In the 70S ribosome it contacts the 23S rRNA (bridge B1a) and protein L5 of the 50S subunit (bridge B1b), connecting the 2 subunits; these bridges are implicated in subunit movement. Contacts the tRNAs in the A and P-sites. The polypeptide is Small ribosomal subunit protein uS13 (Colwellia psychrerythraea (strain 34H / ATCC BAA-681) (Vibrio psychroerythus)).